A 255-amino-acid polypeptide reads, in one-letter code: Glutamate racemase (255 aa).

Substrate contacts are provided by residues 7 to 8 (DS) and 39 to 40 (YG). Residue Cys-70 is the Proton donor/acceptor of the active site. A substrate-binding site is contributed by 71–72 (NT). The Proton donor/acceptor role is filled by Cys-181. 182-183 (TH) provides a ligand contact to substrate.

The protein belongs to the aspartate/glutamate racemases family.

It carries out the reaction L-glutamate = D-glutamate. It participates in cell wall biogenesis; peptidoglycan biosynthesis. Provides the (R)-glutamate required for cell wall biosynthesis. In Helicobacter pylori (strain P12), this protein is Glutamate racemase.